We begin with the raw amino-acid sequence, 307 residues long: Cytochrome c1 2, heme protein, mitochondrial (307 aa).

The transit peptide at 1–64 directs the protein to the mitochondrion; sequence MVGGGVIRQL…LLSFSTVASA (64 aa). Residues 65 to 270 lie on the Mitochondrial intermembrane side of the membrane; the sequence is DEAEHGLECP…EPEMEERKLM (206 aa). A Cytochrome c domain is found at 90–197; the sequence is ASIRRGHQVY…NGQNYVFALL (108 aa). Positions 103, 106, 107, and 226 each coordinate heme c. Residues 271-288 form a helical membrane-spanning segment; it reads GFKWIFLLSLALLQAAYY. Topologically, residues 289 to 307 are mitochondrial matrix; that stretch reads RRLKWSVLKSRKLVLDVVN.

It belongs to the cytochrome c family. In terms of assembly, component of the ubiquinol-cytochrome c oxidoreductase (cytochrome b-c1 complex, complex III, CIII), a multisubunit enzyme composed of 10 subunits. The complex is composed of 3 respiratory subunits cytochrome b (MT-CYB), cytochrome c1 (CYC1-1 or CYC1-2) and Rieske protein (UCR1-1 or UCR1-2), 2 core protein subunits MPPalpha1 (or MPPalpha2) and MPPB, and 5 low-molecular weight protein subunits QCR7-1 (or QCR7-2), UCRQ-1 (or UCRQ-2), QCR9, UCRY and probably QCR6-1 (or QCR6-2). The complex exists as an obligatory dimer and forms supercomplexes (SCs) in the inner mitochondrial membrane with NADH-ubiquinone oxidoreductase (complex I, CI), resulting in different assemblies (supercomplexes SCI(1)III(2) and SCI(2)III(4)). Post-translationally, binds 1 heme c group covalently per subunit.

It is found in the mitochondrion inner membrane. Component of the ubiquinol-cytochrome c oxidoreductase, a multisubunit transmembrane complex that is part of the mitochondrial electron transport chain which drives oxidative phosphorylation. The respiratory chain contains 3 multisubunit complexes succinate dehydrogenase (complex II, CII), ubiquinol-cytochrome c oxidoreductase (cytochrome b-c1 complex, complex III, CIII) and cytochrome c oxidase (complex IV, CIV), that cooperate to transfer electrons derived from NADH and succinate to molecular oxygen, creating an electrochemical gradient over the inner membrane that drives transmembrane transport and the ATP synthase. The cytochrome b-c1 complex catalyzes electron transfer from ubiquinol to cytochrome c, linking this redox reaction to translocation of protons across the mitochondrial inner membrane, with protons being carried across the membrane as hydrogens on the quinol. In the process called Q cycle, 2 protons are consumed from the matrix, 4 protons are released into the intermembrane space and 2 electrons are passed to cytochrome c. Cytochrome c1 is a catalytic core subunit containing a c-type heme. It transfers electrons from the [2Fe-2S] iron-sulfur cluster of the Rieske protein to cytochrome c. This is Cytochrome c1 2, heme protein, mitochondrial (CYC1-2) from Arabidopsis thaliana (Mouse-ear cress).